We begin with the raw amino-acid sequence, 89 residues long: Small ribosomal subunit protein uS14 (89 aa).

This sequence belongs to the universal ribosomal protein uS14 family. Part of the 30S ribosomal subunit. Contacts proteins S3 and S10.

Its function is as follows. Binds 16S rRNA, required for the assembly of 30S particles and may also be responsible for determining the conformation of the 16S rRNA at the A site. This chain is Small ribosomal subunit protein uS14, found in Onion yellows phytoplasma (strain OY-M).